The primary structure comprises 290 residues: Energy-coupling factor transporter ATP-binding protein EcfA2 (290 aa).

Residues 6–246 enclose the ABC transporter domain; it reads EKVEHVYNAR…ADKLAAIGLS (241 aa). Residue 40–47 participates in ATP binding; sequence GHTGSGKS.

The protein belongs to the ABC transporter superfamily. Energy-coupling factor EcfA family. In terms of assembly, forms a stable energy-coupling factor (ECF) transporter complex composed of 2 membrane-embedded substrate-binding proteins (S component), 2 ATP-binding proteins (A component) and 2 transmembrane proteins (T component).

The protein resides in the cell membrane. ATP-binding (A) component of a common energy-coupling factor (ECF) ABC-transporter complex. Unlike classic ABC transporters this ECF transporter provides the energy necessary to transport a number of different substrates. The polypeptide is Energy-coupling factor transporter ATP-binding protein EcfA2 (Geobacillus kaustophilus (strain HTA426)).